A 101-amino-acid polypeptide reads, in one-letter code: Small ribosomal subunit protein uS14 (101 aa).

The protein belongs to the universal ribosomal protein uS14 family. In terms of assembly, part of the 30S ribosomal subunit. Contacts proteins S3 and S10.

In terms of biological role, binds 16S rRNA, required for the assembly of 30S particles and may also be responsible for determining the conformation of the 16S rRNA at the A site. This is Small ribosomal subunit protein uS14 from Nitrosomonas europaea (strain ATCC 19718 / CIP 103999 / KCTC 2705 / NBRC 14298).